We begin with the raw amino-acid sequence, 308 residues long: Protoheme IX farnesyltransferase (308 aa).

The next 8 membrane-spanning stretches (helical) occupy residues 20–40 (LLAYLALTKPRVIELLLVTAI), 50–70 (AIHPLLMLNTLVGGMMAAAGA), 102–122 (NALALGLTLTVISFFWLWCAT), 124–144 (LLAGVLALVTVAFYVFVYTLW), 149–169 (TSQNVVWGGAAGCMPVMIGWS), 170–190 (AITGTIAWPALAMFAIIFFWT), 227–249 (LIYTWLTVAATLVLALATSWLYG), and 288–308 (YLAVVFCALAVDSVIALPTLH).

Belongs to the UbiA prenyltransferase family. Protoheme IX farnesyltransferase subfamily.

Its subcellular location is the cell membrane. It carries out the reaction heme b + (2E,6E)-farnesyl diphosphate + H2O = Fe(II)-heme o + diphosphate. Its pathway is porphyrin-containing compound metabolism; heme O biosynthesis; heme O from protoheme: step 1/1. Converts heme B (protoheme IX) to heme O by substitution of the vinyl group on carbon 2 of heme B porphyrin ring with a hydroxyethyl farnesyl side group. The protein is Protoheme IX farnesyltransferase of Mycobacterium tuberculosis (strain ATCC 25618 / H37Rv).